Here is a 929-residue protein sequence, read N- to C-terminus: LPS-assembly protein LptD (929 aa).

Positions 1-33 (MAVKSLVFRRKFPLLVTGSLLALQPVAALTVQA) are cleaved as a signal peptide. The segment at 58 to 101 (NLPPRPAHTATSVSTAAAGSSVSGSGGETVEAEPTQRLVTESGG) is disordered. Residues 66-90 (TATSVSTAAAGSSVSGSGGETVEAE) show a composition bias toward low complexity.

The protein belongs to the LptD family. As to quaternary structure, component of the lipopolysaccharide transport and assembly complex. Interacts with LptE and LptA.

The protein resides in the cell outer membrane. Its function is as follows. Together with LptE, is involved in the assembly of lipopolysaccharide (LPS) at the surface of the outer membrane. The sequence is that of LPS-assembly protein LptD from Pseudomonas aeruginosa (strain LESB58).